Consider the following 270-residue polypeptide: Interleukin-1 alpha (270 aa).

Positions 1–112 (MAKVPDLFED…EVEEEIMKPR (112 aa)) are excised as a propeptide. Lys-82 carries the N6-acetyllysine modification. A nuclear localization signal (NLS) region spans residues 82–86 (KKRRL). Ser-87 is subject to Phosphoserine. Asn-139 is a glycosylation site (N-linked (GlcNAc...) asparagine).

The protein belongs to the IL-1 family. In terms of assembly, monomer. Interacts with TMED10; the interaction mediates the translocation from the cytoplasm into the ERGIC (endoplasmic reticulum-Golgi intermediate compartment) and thereby secretion. Interacts with IL1R1. Interacts with S100A13; this interaction is the first step in the export of IL1A, followed by direct translocation of this complex across the plasma membrane. In terms of processing, acetylated within its nuclear localization sequence, which impacts subcellular localization. Proteolytic processed by CAPN1 in a calcium-dependent manner. Cleavage from 31 kDa precursor to 18 kDa biologically active molecules. Post-translationally, phosphorylated. Phosphorylation greatly enhances susceptibility to digestion and promotes the conversion of pre-IL1A alpha to the biologically active IL1A.

It is found in the nucleus. Its subcellular location is the cytoplasm. The protein localises to the secreted. Functionally, cytokine constitutively present intracellularly in nearly all resting non-hematopoietic cells that plays an important role in inflammation and bridges the innate and adaptive immune systems. After binding to its receptor IL1R1 together with its accessory protein IL1RAP, forms the high affinity interleukin-1 receptor complex. Signaling involves the recruitment of adapter molecules such as MYD88, IRAK1 or IRAK4. In turn, mediates the activation of NF-kappa-B and the three MAPK pathways p38, p42/p44 and JNK pathways. Within the cell, acts as an alarmin and cell death results in its liberation in the extracellular space after disruption of the cell membrane to induce inflammation and alert the host to injury or damage. In addition to its role as a danger signal, which occurs when the cytokine is passively released by cell necrosis, directly senses DNA damage and acts as signal for genotoxic stress without loss of cell integrity. This chain is Interleukin-1 alpha (IL1A), found in Felis catus (Cat).